The sequence spans 1428 residues: DNA topoisomerase 2 (1428 aa).

Residues Asn-70, Asn-99, 127-129 (SSN), and 140-147 (GRNGYGAK) contribute to the ATP site. The interaction with DNA stretch occupies residues 333–336 (KKKK). 365 to 367 (QTK) is an ATP binding site. In terms of domain architecture, Toprim spans 443–557 (CTLVLTEGDS…GLLDIQGFLL (115 aa)). Mg(2+) is bound by residues Glu-449, Asp-526, and Asp-528. The Topo IIA-type catalytic domain maps to 692–1159 (IPNVLDGFKP…SAKDIWNTDL (468 aa)). Tyr-782 (O-(5'-phospho-DNA)-tyrosine intermediate) is an active-site residue. The interval 965 to 974 (KLISPISLMN) is interaction with DNA. Disordered regions lie at residues 1083-1102 (KGAT…TENV), 1176-1217 (ARGG…RKGK), 1240-1288 (KAPT…ELSK), and 1303-1428 (MGST…NEED). Thr-1086 carries the post-translational modification Phosphothreonine; by CK2. At Ser-1087 the chain carries Phosphoserine; by CK2. The segment covering 1207-1217 (KNKKSTARKGK) has biased composition (basic residues). Phosphoserine is present on Ser-1252. The residue at position 1258 (Thr-1258) is a Phosphothreonine; by CK2. Phosphoserine; by CK2 occurs at positions 1266, 1269, and 1272. The span at 1275 to 1286 (DIKKEDKDEGEL) shows a compositional bias: basic and acidic residues. Over residues 1332–1347 (TAVKPKLAKKPVRKQQ) the composition is skewed to basic residues. Phosphoserine; by CK2 is present on residues Ser-1353, Ser-1356, Ser-1408, and Ser-1423. Positions 1403-1428 (ELSDDSFIEDDEEENQGSDVSFNEED) are enriched in acidic residues.

This sequence belongs to the type II topoisomerase family. In terms of assembly, homodimer. The cofactor is Mg(2+). Mn(2+) serves as cofactor. Requires Ca(2+) as cofactor. In terms of processing, phosphorylation enhances the activity. Stimulates decatenation activity.

It is found in the nucleus. It carries out the reaction ATP-dependent breakage, passage and rejoining of double-stranded DNA.. Functionally, control of topological states of DNA by transient breakage and subsequent rejoining of DNA strands. Topoisomerase II makes double-strand breaks. Essential during mitosis and meiosis for proper segregation of daughter chromosomes. The sequence is that of DNA topoisomerase 2 (TOP2) from Saccharomyces cerevisiae (strain ATCC 204508 / S288c) (Baker's yeast).